Reading from the N-terminus, the 686-residue chain is Polyribonucleotide nucleotidyltransferase (686 aa).

Mg(2+)-binding residues include Asp-478 and Asp-484. Residues 545 to 604 (PRVEVIQIPTDKIGLLIGPGGKTINALQDEYGVNISVENDGTVYVAGVEGMSVKAAVSAI) form the KH domain. The S1 motif domain occupies 614–684 (GDIYVGKVVK…KQNRISLEMV (71 aa)).

It belongs to the polyribonucleotide nucleotidyltransferase family. Requires Mg(2+) as cofactor.

Its subcellular location is the cytoplasm. It carries out the reaction RNA(n+1) + phosphate = RNA(n) + a ribonucleoside 5'-diphosphate. In terms of biological role, involved in mRNA degradation. Catalyzes the phosphorolysis of single-stranded polyribonucleotides processively in the 3'- to 5'-direction. The polypeptide is Polyribonucleotide nucleotidyltransferase (Rubrobacter xylanophilus (strain DSM 9941 / JCM 11954 / NBRC 16129 / PRD-1)).